Here is a 441-residue protein sequence, read N- to C-terminus: Ribosomal protein uS12 methylthiotransferase RimO (441 aa).

Positions 8–118 (PKIGFVSLGC…VLEHVHHYVP (111 aa)) constitute an MTTase N-terminal domain. Positions 17, 53, 82, 150, 154, and 157 each coordinate [4Fe-4S] cluster. A Radical SAM core domain is found at 136–373 (LTPRHYAYLK…MQLQQQISAE (238 aa)). The TRAM domain occupies 376–441 (QEKVGREILV…DEYDLWGSRV (66 aa)).

The protein belongs to the methylthiotransferase family. RimO subfamily. [4Fe-4S] cluster is required as a cofactor.

The protein localises to the cytoplasm. It carries out the reaction L-aspartate(89)-[ribosomal protein uS12]-hydrogen + (sulfur carrier)-SH + AH2 + 2 S-adenosyl-L-methionine = 3-methylsulfanyl-L-aspartate(89)-[ribosomal protein uS12]-hydrogen + (sulfur carrier)-H + 5'-deoxyadenosine + L-methionine + A + S-adenosyl-L-homocysteine + 2 H(+). Its function is as follows. Catalyzes the methylthiolation of an aspartic acid residue of ribosomal protein uS12. The polypeptide is Ribosomal protein uS12 methylthiotransferase RimO (Shigella flexneri).